Consider the following 460-residue polypeptide: Serine--tRNA ligase (460 aa).

255-257 (TAE) lines the L-serine pocket. Residues 286–288 (RKE) and Val-302 contribute to the ATP site. Position 309 (Glu-309) interacts with L-serine. 373–376 (EMVS) is a binding site for ATP. Thr-409 provides a ligand contact to L-serine.

Belongs to the class-II aminoacyl-tRNA synthetase family. Type-1 seryl-tRNA synthetase subfamily. Homodimer. The tRNA molecule binds across the dimer.

It is found in the cytoplasm. It catalyses the reaction tRNA(Ser) + L-serine + ATP = L-seryl-tRNA(Ser) + AMP + diphosphate + H(+). The catalysed reaction is tRNA(Sec) + L-serine + ATP = L-seryl-tRNA(Sec) + AMP + diphosphate + H(+). Its pathway is aminoacyl-tRNA biosynthesis; selenocysteinyl-tRNA(Sec) biosynthesis; L-seryl-tRNA(Sec) from L-serine and tRNA(Sec): step 1/1. Functionally, catalyzes the attachment of serine to tRNA(Ser). Is also able to aminoacylate tRNA(Sec) with serine, to form the misacylated tRNA L-seryl-tRNA(Sec), which will be further converted into selenocysteinyl-tRNA(Sec). The protein is Serine--tRNA ligase of Aeropyrum pernix (strain ATCC 700893 / DSM 11879 / JCM 9820 / NBRC 100138 / K1).